Here is a 257-residue protein sequence, read N- to C-terminus: Tryptophan synthase alpha chain (257 aa).

Residues glutamate 44 and aspartate 55 each act as proton acceptor in the active site.

It belongs to the TrpA family. In terms of assembly, tetramer of two alpha and two beta chains.

It carries out the reaction (1S,2R)-1-C-(indol-3-yl)glycerol 3-phosphate + L-serine = D-glyceraldehyde 3-phosphate + L-tryptophan + H2O. It functions in the pathway amino-acid biosynthesis; L-tryptophan biosynthesis; L-tryptophan from chorismate: step 5/5. Functionally, the alpha subunit is responsible for the aldol cleavage of indoleglycerol phosphate to indole and glyceraldehyde 3-phosphate. This chain is Tryptophan synthase alpha chain, found in Chlamydia felis (strain Fe/C-56) (Chlamydophila felis).